A 149-amino-acid chain; its full sequence is 16.9 kDa class I heat shock protein 3 (149 aa).

The sHSP domain maps to 35 to 149 (DTAAFANARV…PEVKAIEISG (115 aa)).

This sequence belongs to the small heat shock protein (HSP20) family. May form oligomeric structures.

Its subcellular location is the cytoplasm. This is 16.9 kDa class I heat shock protein 3 (HSP16.9C) from Oryza sativa subsp. japonica (Rice).